Consider the following 161-residue polypeptide: Phosphopantetheine adenylyltransferase (161 aa).

Residue S10 coordinates substrate. ATP-binding positions include 10 to 11 and H18; that span reads SF. Substrate contacts are provided by K42, A75, and R89. ATP-binding positions include 90-92, E100, and 125-131; these read GLR and LSPISSS.

It belongs to the bacterial CoaD family. As to quaternary structure, homohexamer. The cofactor is Mg(2+).

It localises to the cytoplasm. It catalyses the reaction (R)-4'-phosphopantetheine + ATP + H(+) = 3'-dephospho-CoA + diphosphate. Its pathway is cofactor biosynthesis; coenzyme A biosynthesis; CoA from (R)-pantothenate: step 4/5. In terms of biological role, reversibly transfers an adenylyl group from ATP to 4'-phosphopantetheine, yielding dephospho-CoA (dPCoA) and pyrophosphate. This chain is Phosphopantetheine adenylyltransferase, found in Streptococcus agalactiae serotype Ia (strain ATCC 27591 / A909 / CDC SS700).